Here is a 234-residue protein sequence, read N- to C-terminus: MEFSPLLQRATLIQRYKRFLADVITPDGRELTLHCPNTGAMTGCATRGDTVWYSTSDNTKRKYPHTWELTQSQSGAFICVNTLWANRLTKEAILNESISELSGYSSLKSEVKYGAERSRIDFMLQADSRPDCYIEVKSVTLAENEQGYFPDAVTERGQKHLRELMNVAAEGQRAVIFFAVLHSAITRFSPARHIDEKYAQLLSEAQQRGVEILAYKAEISAEGMALKKSLPVTL.

The segment at residues 201-220 is a DNA-binding region (H-T-H motif); sequence LLSEAQQRGVEILAYKAEIS.

This sequence belongs to the SfsA family.

In terms of biological role, binds to DNA non-specifically. Could be a regulatory factor involved in maltose metabolism. The sequence is that of Sugar fermentation stimulation protein A from Shigella boydii serotype 4 (strain Sb227).